The chain runs to 351 residues: Probable cell division control protein 7 homolog 1 (351 aa).

A Protein kinase domain is found at 21–341; the sequence is YTPIEKIGEG…ASDALSHPFF (321 aa). ATP-binding positions include 27–35 and K50; that span reads IGEGSFSVV. D137 (proton acceptor) is an active-site residue.

The protein belongs to the protein kinase superfamily. Ser/Thr protein kinase family. CDC7 subfamily. It depends on Mg(2+) as a cofactor.

It carries out the reaction L-seryl-[protein] + ATP = O-phospho-L-seryl-[protein] + ADP + H(+). It catalyses the reaction L-threonyl-[protein] + ATP = O-phospho-L-threonyl-[protein] + ADP + H(+). Its function is as follows. Serine/threonine-protein kinase. Needed for the initiation of DNA synthesis during mitosis as well as for synaptonemal complex formation and commitment to recombination during meiosis. This chain is Probable cell division control protein 7 homolog 1 (CDC7-1), found in Encephalitozoon cuniculi (strain GB-M1) (Microsporidian parasite).